A 249-amino-acid chain; its full sequence is Transmembrane protein 51 (249 aa).

The next 2 helical transmembrane spans lie at 17-37 and 64-84; these read IGLG…VPGF and VAYV…CLSI. Disordered stretches follow at residues 95-126, 161-199, and 213-249; these read ELAR…SRYY, TGLD…PLKV, and RITL…RPPD. Positions 99–108 are enriched in polar residues; the sequence is IQQQAGTVPH. S109, S114, S178, and S188 each carry phosphoserine. The segment covering 167-178 has biased composition (polar residues); the sequence is TPTSTRAETETS. Residues 190-199 are compositionally biased toward basic residues; that stretch reads LAKRLKPLKV. Over residues 220-234 the composition is skewed to pro residues; the sequence is NVPPPSIEPLTPPPL.

The protein resides in the membrane. The sequence is that of Transmembrane protein 51 (Tmem51) from Mus musculus (Mouse).